We begin with the raw amino-acid sequence, 1588 residues long: Ubiquitin carboxyl-terminal hydrolase 54 (1588 aa).

Residue arginine 12 is modified to Omega-N-methylarginine. The USP domain occupies 31 to 352; it reads KGLSNEPGQN…QPLLLLYADP (322 aa). The Nucleophile role is filled by cysteine 42. Residues histidine 67, cysteine 69, cysteine 74, cysteine 77, histidine 133, cysteine 145, cysteine 150, histidine 153, cysteine 166, cysteine 169, cysteine 225, and cysteine 229 each coordinate Zn(2+). Residue histidine 302 is the Proton acceptor of the active site. Composition is skewed to basic and acidic residues over residues 380 to 391 and 424 to 434; these read DSGHLTDSECNQ and SEGETLKEKQA. Disordered regions lie at residues 380–447 and 459–519; these read DSGH…TSRL and HSRP…PTWR. Serine 424 carries the phosphoserine modification. Polar residues-rich tracts occupy residues 436–445 and 459–471; these read RNASKSSSTS and HSRP…TNAA. The segment covering 499 to 512 has biased composition (low complexity); it reads TESTSSEARSSSSS. Serine 574, serine 613, and serine 616 each carry phosphoserine. The segment covering 601 to 616 has biased composition (low complexity); that stretch reads ESGYESSERNSSSPVS. The disordered stretch occupies residues 601 to 620; it reads ESGYESSERNSSSPVSLDAA. The stretch at 678-712 forms a coiled coil; sequence TSKSELDELQEEVARRAQEQELRKKREKELEAAKG. 5 disordered regions span residues 801–839, 856–895, 950–969, 1093–1172, and 1525–1562; these read RSLQ…EQSV, DSEL…SPPG, EDNS…TTQD, TRDV…SRRR, and GSVL…SAGE. The span at 808 to 825 shows a compositional bias: low complexity; that stretch reads QQQPPSQQPVQPSASLPS. The span at 878–895 shows a compositional bias: polar residues; it reads SLVSPSPAQSVSQHSPPG. Position 1138 is a phosphoserine (serine 1138). Basic and acidic residues predominate over residues 1536 to 1547; the sequence is RRIDVPPDDDGR.

This sequence belongs to the peptidase C19 family.

It catalyses the reaction Thiol-dependent hydrolysis of ester, thioester, amide, peptide and isopeptide bonds formed by the C-terminal Gly of ubiquitin (a 76-residue protein attached to proteins as an intracellular targeting signal).. In terms of biological role, deubiquitinase that specifically mediates 'Lys-63'-linked deubiquitination of substrates with a polyubiquitin chain composed of at least 3 ubiquitins. Specifically recognizes ubiquitin chain in position S2 and catalyzes cleavage of polyubiquitin within 'Lys-63'-linked chains. Not able to deubiquitinate substrates with shorter ubiquitin chains. Mediates deubiquitination of PLK4, maintaining PLK4 stability by reducing its ubiquitination-mediated degradation. This chain is Ubiquitin carboxyl-terminal hydrolase 54 (Usp54), found in Rattus norvegicus (Rat).